Reading from the N-terminus, the 117-residue chain is Ribosome-binding factor A (117 aa).

Belongs to the RbfA family. In terms of assembly, monomer. Binds 30S ribosomal subunits, but not 50S ribosomal subunits or 70S ribosomes.

The protein resides in the cytoplasm. Functionally, one of several proteins that assist in the late maturation steps of the functional core of the 30S ribosomal subunit. Associates with free 30S ribosomal subunits (but not with 30S subunits that are part of 70S ribosomes or polysomes). Required for efficient processing of 16S rRNA. May interact with the 5'-terminal helix region of 16S rRNA. This is Ribosome-binding factor A from Lacticaseibacillus casei (strain BL23) (Lactobacillus casei).